The following is a 231-amino-acid chain: Non-fluorescent flavoprotein (231 aa).

Belongs to the bacterial luciferase oxidoreductase family. Homodimer. Requires FMN as cofactor.

The polypeptide is Non-fluorescent flavoprotein (luxF) (Photobacterium phosphoreum).